A 437-amino-acid polypeptide reads, in one-letter code: Phosphomethylpyrimidine synthase (437 aa).

Substrate contacts are provided by residues Asn-69, Met-98, Tyr-127, His-163, 185 to 187 (SRG), 226 to 229 (DACR), and Glu-265. His-269 is a Zn(2+) binding site. Tyr-292 contacts substrate. His-333 is a Zn(2+) binding site. Cys-409, Cys-412, and Cys-416 together coordinate [4Fe-4S] cluster.

This sequence belongs to the ThiC family. [4Fe-4S] cluster is required as a cofactor.

It carries out the reaction 5-amino-1-(5-phospho-beta-D-ribosyl)imidazole + S-adenosyl-L-methionine = 4-amino-2-methyl-5-(phosphooxymethyl)pyrimidine + CO + 5'-deoxyadenosine + formate + L-methionine + 3 H(+). Its pathway is cofactor biosynthesis; thiamine diphosphate biosynthesis. Its function is as follows. Catalyzes the synthesis of the hydroxymethylpyrimidine phosphate (HMP-P) moiety of thiamine from aminoimidazole ribotide (AIR) in a radical S-adenosyl-L-methionine (SAM)-dependent reaction. In Clostridium kluyveri (strain NBRC 12016), this protein is Phosphomethylpyrimidine synthase.